A 146-amino-acid polypeptide reads, in one-letter code: D-aminoacyl-tRNA deacylase (146 aa).

A Gly-cisPro motif, important for rejection of L-amino acids motif is present at residues 138–139 (GP).

The protein belongs to the DTD family. In terms of assembly, homodimer.

The protein resides in the cytoplasm. The catalysed reaction is glycyl-tRNA(Ala) + H2O = tRNA(Ala) + glycine + H(+). It catalyses the reaction a D-aminoacyl-tRNA + H2O = a tRNA + a D-alpha-amino acid + H(+). In terms of biological role, an aminoacyl-tRNA editing enzyme that deacylates mischarged D-aminoacyl-tRNAs. Also deacylates mischarged glycyl-tRNA(Ala), protecting cells against glycine mischarging by AlaRS. Acts via tRNA-based rather than protein-based catalysis; rejects L-amino acids rather than detecting D-amino acids in the active site. By recycling D-aminoacyl-tRNA to D-amino acids and free tRNA molecules, this enzyme counteracts the toxicity associated with the formation of D-aminoacyl-tRNA entities in vivo and helps enforce protein L-homochirality. This chain is D-aminoacyl-tRNA deacylase, found in Xanthomonas campestris pv. campestris (strain 8004).